Reading from the N-terminus, the 221-residue chain is Protein lethal(2)k10201 (221 aa).

2 consecutive C2H2-type zinc fingers follow at residues 74 to 97 (YSCVECRKMLPTAHLLDLHITEQH) and 113 to 138 (FSCFLEECTIKFHTARQRKDHCIITH). Residues 146–168 (FDHSKNRGKQKHQGKSKPNSMEV) form a disordered region. Residues 151-160 (NRGKQKHQGK) are compositionally biased toward basic residues.

In terms of biological role, vital for development. The sequence is that of Protein lethal(2)k10201 (l(2)k10201) from Drosophila melanogaster (Fruit fly).